Reading from the N-terminus, the 1453-residue chain is MFSFVDLRLLLLLGATALLTHGQEDIPEVSCIHNGLRVPNGETWKPEVCLICICHNGTAVCDDVQCNEELDCPNPQRREGECCAFCPEEYVSPNSEDVGVEGPKGDPGPQGPRGPVGPPGRDGIPGQPGLPGPPGPPGPPGPPGLGGNFASQMSYGYDEKSAGVSVPGPMGPSGPRGLPGPPGAPGPQGFQGPPGEPGEPGGSGPMGPRGPPGPPGKNGDDGEAGKPGRPGERGPPGPQGARGLPGTAGLPGMKGHRGFSGLDGAKGDAGPAGPKGEPGSPGENGAPGQMGPRGLPGERGRPGPPGTAGARGNDGAVGAAGPPGPTGPTGPPGFPGAVGAKGEAGPQGARGSEGPQGVRGEPGPPGPAGAAGPAGNPGADGQPGAKGANGAPGIAGAPGFPGARGPSGPQGPSGPPGPKGNSGEPGAPGNKGDTGAKGEPGATGVQGPPGPAGEEGKRGARGEPGPSGLPGPPGERGGPGSRGFPGADGVAGPKGPSGERGAPGPAGPKGSPGEAGRPGEAGLPGAKGLTGSPGSPGPDGKTGPPGPAGQDGRPGPAGPPGARGQAGVMGFPGPKGTAGEPGKAGERGLPGPPGAVGPAGKDGEAGAQGAPGPAGPAGERGEQGPAGSPGFQGLPGPAGPPGEAGKPGEQGVPGDLGAPGPSGARGERGFPGERGVQGPPGPAGPRGNNGAPGNDGAKGDTGAPGAPGSQGAPGLQGMPGERGAAGLPGPKGDRGDAGPKGADGSPGKDGARGLTGPIGPPGPAGAPGDKGEAGPSGPPGPTGARGAPGDRGEAGPPGPAGFAGPPGADGQPGAKGEPGDTGVKGDAGPPGPAGPAGPPGPIGNVGAPGPKGPRGAAGPPGATGFPGAAGRVGPPGPSGNAGPPGPPGPVGKEGGKGPRGETGPAGRPGEVGPPGPPGPAGEKGSPGADGPAGSPGTPGPQGIAGQRGVVGLPGQRGERGFPGLPGPSGEPGKQGPSGSSGERGPPGPMGPPGLAGPPGESGREGSPGAEGSPGRDGAPGAKGDRGETGPAGPPGAPGAPGAPGPVGPAGKNGDRGETGPAGPAGPIGPAGARGPAGPQGPRGDKGETGEQGDRGIKGHRGFSGLQGPPGSPGSPGEQGPSGASGPAGPRGPPGSAGSPGKDGLNGLPGPIGPPGPRGRTGDSGPAGPPGPPGPPGPPGPPSGGYDFSFLPQPPQEKSQDGGRYYRADDANVVRDRDLEVDTTLKSLSQQIENIRSPEGSRKNPARTCRDLKMCHSDWKSGEYWIDPNQGCNLDAIKVYCNMETGQTCVFPTQPSVPQKNWYISPNPKEKKHVWFGESMTDGFPFEYGSEGSDPADVAIQLTFLRLMSTEASQNITYHCKNSVAYMDQQTGNLKKALLLQGSNEIELRGEGNSRFTYSTLVDGCTSHTGTWGKTVIEYKTTKTSRLPIIDVAPLDIGAPDQEFGLDIGPACFV.

Residues 1–22 form the signal peptide; sequence MFSFVDLRLLLLLGATALLTHG. The propeptide at 23 to 151 is N-terminal propeptide; that stretch reads QEDIPEVSCI…PPGLGGNFAS (129 aa). The region spanning 29–87 is the VWFC domain; it reads VSCIHNGLRVPNGETWKPEVCLICICHNGTAVCDDVQCNEELDCPNPQRREGECCAFCP. Residue N56 is glycosylated (N-linked (GlcNAc...) asparagine). The interval 94–1210 is disordered; it reads NSEDVGVEGP…GGRYYRADDA (1117 aa). 2 stretches are compositionally biased toward pro residues: residues 109 to 118 and 128 to 143; these read PQGPRGPVGP and PGLP…PGPP. Positions 152-167 are nonhelical region (N-terminal); the sequence is QMSYGYDEKSAGVSVP. The residue at position 160 (K160) is an Allysine. At S161 the chain carries Phosphoserine. Residues 168–1181 form a triple-helical region region; that stretch reads GPMGPSGPRG…PGPPGPPGPP (1014 aa). P179, P182, P185, P194, P197, P200, P215, P230, P236, P245, and P251 each carry 4-hydroxyproline. Over residues 198–207 the composition is skewed to gly residues; that stretch reads GEPGGSGPMG. The span at 218 to 232 shows a compositional bias: basic and acidic residues; it reads NGDDGEAGKPGRPGE. The residue at position 254 (K254) is a 5-hydroxylysine; alternate. The O-linked (Gal...) hydroxylysine; alternate glycan is linked to K254. Position 260 is a phosphoserine (S260). Residues 268–284 are compositionally biased toward low complexity; sequence DAGPAGPKGEPGSPGEN. 5 positions are modified to 4-hydroxyproline: P278, P281, P287, P296, and P302. A compositionally biased stretch (low complexity) spans 307–320; the sequence is TAGARGNDGAVGAA. Residues 322–334 show a composition bias toward pro residues; sequence PPGPTGPTGPPGF. P323, P332, P335, P362, P365, P377, P383, P392, P398, P401, and P416 each carry 4-hydroxyproline. A compositionally biased stretch (low complexity) spans 368–407; it reads AGAAGPAGNPGADGQPGAKGANGAPGIAGAPGFPGARGPS. K419 bears the 5-hydroxylysine mark. 8 positions are modified to 4-hydroxyproline: P425, P428, P440, P449, P464, P470, P479, and P485. Positions 474–483 are enriched in gly residues; that stretch reads GERGGPGSRG. At K494 the chain carries 5-hydroxylysine. Residues 499 to 515 are compositionally biased toward low complexity; the sequence is ERGAPGPAGPKGSPGEA. Residues P503, P512, P518, P524, P533, P536, P545, P554, P560, P572, P581, P590, P593, P611, P629, P635, P641, P647, P653, P659, P671, P680, P692, P704, P707, P713, P719, and P728 each carry the 4-hydroxyproline modification. Over residues 527-566 the composition is skewed to low complexity; that stretch reads KGLTGSPGSPGPDGKTGPPGPAGQDGRPGPAGPPGARGQA. Over residues 623 to 650 the composition is skewed to low complexity; it reads QGPAGSPGFQGLPGPAGPPGEAGKPGEQ. 2 stretches are compositionally biased toward low complexity: residues 685–695 and 703–716; these read PRGNNGAPGND and APGA…PGLQ. Positions 734 to 736 match the Cell attachment site motif; sequence RGD. At K740 the chain carries 5-hydroxylysine. 3 positions are modified to 4-hydroxyproline: P746, P761, and P767. At S776 the chain carries Phosphoserine. 7 positions are modified to 4-hydroxyproline: P788, P797, P806, P812, P830, P839, and P848. A compositionally biased stretch (low complexity) spans 800 to 815; that stretch reads AGFAGPPGADGQPGAK. Residues 829–841 show a composition bias toward pro residues; it reads PPGPAGPAGPPGP. Residues 842–872 are compositionally biased toward low complexity; the sequence is IGNVGAPGPKGPRGAAGPPGATGFPGAAGRV. K851 bears the 5-hydroxylysine mark. P860 and P866 each carry 4-hydroxyproline. Position 874 is a 3-hydroxyproline (P874). P875, P884, P887, P908, P917, P926, P935, P953, P962, P965, P971, P986, P992, P998, P1007, and P1013 each carry 4-hydroxyproline. The span at 901–910 shows a compositional bias: low complexity; the sequence is ETGPAGRPGE. Low complexity predominate over residues 920–935; that stretch reads AGEKGSPGADGPAGSP. Positions 985-995 are enriched in pro residues; the sequence is PPGPMGPPGLA. The segment covering 997–1012 has biased composition (low complexity); sequence PPGESGREGSPGAEGS. K1022 is subject to 5-hydroxylysine. Over residues 1031–1046 the composition is skewed to pro residues; the sequence is AGPPGAPGAPGAPGPV. 4-hydroxyproline is present on residues P1034, P1037, and P1040. The span at 1067 to 1081 shows a compositional bias: low complexity; sequence IGPAGARGPAGPQGP. The short motif at 1082–1084 is the Cell attachment site element; that stretch reads RGD. Residues 1082-1096 are compositionally biased toward basic and acidic residues; it reads RGDKGETGEQGDRGI. At K1085 the chain carries 5-hydroxylysine. K1097 is modified (5-hydroxylysine; alternate). An O-linked (Gal...) hydroxylysine; alternate glycan is attached at K1097. A compositionally biased stretch (low complexity) spans 1102–1148; the sequence is FSGLQGPPGSPGSPGEQGPSGASGPAGPRGPPGSAGSPGKDGLNGLP. Residues P1109, P1112, P1115, P1133, and P1148 each carry the 4-hydroxyproline modification. P1153 carries the 3-hydroxyproline modification. At P1154 the chain carries 4-hydroxyproline. The segment covering 1166–1181 has biased composition (pro residues); sequence AGPPGPPGPPGPPGPP. Residue P1168 is modified to 3-hydroxyproline. The residue at position 1169 (P1169) is a 4-hydroxyproline. At P1171 the chain carries 3-hydroxyproline. Residue P1172 is modified to 4-hydroxyproline. Residue P1174 is modified to 3-hydroxyproline. 4-hydroxyproline is present on residues P1175, P1178, and P1181. Positions 1182–1207 are nonhelical region (C-terminal); it reads SGGYDFSFLPQPPQEKSQDGGRYYRA. K1197 carries the allysine modification. Residues 1197–1210 show a composition bias toward basic and acidic residues; sequence KSQDGGRYYRADDA. A propeptide spans 1208-1453 (C-terminal propeptide); sequence DDANVVRDRD…GLDIGPACFV (246 aa). One can recognise a Fibrillar collagen NC1 domain in the interval 1218–1453; that stretch reads LEVDTTLKSL…GLDIGPACFV (236 aa). 3 cysteine pairs are disulfide-bonded: C1248–C1280, C1288–C1451, and C1359–C1404. Ca(2+) is bound by residues D1266, N1268, Q1269, C1271, and D1274. A glycan (N-linked (GlcNAc...) asparagine) is linked at N1354.

It belongs to the fibrillar collagen family. In terms of assembly, trimers of one alpha 2(I) and two alpha 1(I) chains. Interacts with MRC2. Interacts with TRAM2. Interacts with MFAP4 in a Ca (2+)-dependent manner. In terms of processing, contains mostly 4-hydroxyproline. Proline residues at the third position of the tripeptide repeating unit (G-X-Y) are hydroxylated in some or all of the chains. Post-translationally, contains 3-hydroxyproline at a few sites. This modification occurs on the first proline residue in the sequence motif Gly-Pro-Hyp, where Hyp is 4-hydroxyproline. Lysine residues at the third position of the tripeptide repeating unit (G-X-Y) are 5-hydroxylated in some or all of the chains. In terms of processing, O-glycosylated on hydroxylated lysine residues. The O-linked glycan consists of a Glc-Gal disaccharide. Forms the fibrils of tendon, ligaments and bones. In bones the fibrils are mineralized with calcium hydroxyapatite.

It localises to the secreted. The protein localises to the extracellular space. It is found in the extracellular matrix. Type I collagen is a member of group I collagen (fibrillar forming collagen). This chain is Collagen alpha-1(I) chain, found in Mus musculus (Mouse).